A 1446-amino-acid polypeptide reads, in one-letter code: Major viral transcription factor ICP4 homolog (1446 aa).

4 disordered regions span residues 25-59 (AEEEGIASGPDGGSQGSRRRGSSGEDLLFGPGGLF), 73-493 (AAAG…PPAD), 801-987 (PGPA…HTPR), and 1385-1446 (THRP…LLLR). The segment covering 73 to 94 (AAAGATRPPRPPSAQQQQQPRR) has biased composition (low complexity). Residues 101–112 (VLDDEDEEEDEP) are compositionally biased toward acidic residues. Low complexity-rich tracts occupy residues 166 to 189 (RSSPSAASPASSSGSPGPSAAPRR) and 216 to 241 (PAAVAAAPARRGPASPASPAAGPVSA). Over residues 262–277 (REPLLDEPAAARRLDP) the composition is skewed to basic and acidic residues. 2 stretches are compositionally biased toward low complexity: residues 284 to 306 (SPVSSNPNSNSNSTTTVAVETVA) and 345 to 397 (GFSS…SSSS). Positions 415 to 426 (GPPPSPPAPAAA) are enriched in pro residues. Residues 427–442 (PRPSASSASSSAAASP) show a composition bias toward low complexity. Over residues 803–815 (PAEPAPGLPPLWP) the composition is skewed to pro residues. A compositionally biased stretch (low complexity) spans 827-877 (PAAAGAPSGLPGSGPSSPASTKSSSSTKSSSSTKSGLSGSSGYASSPAAGP). Positions 883-892 (RRKKKRRAPG) are enriched in basic residues. The segment covering 933-952 (LGLGPAPDPAPALLSSSSSS) has biased composition (low complexity).

The protein belongs to the herpesviridae ICP4 family. In terms of processing, a long stretch of serine residues may be a major site of phosphorylation.

Its subcellular location is the host nucleus. In terms of biological role, this IE protein is a multifunctional protein capable of migrating to the nucleus, binding to DNA, trans-activating other viral genes, and autoregulating its own synthesis. In Suid herpesvirus 1 (strain Kaplan) (SuHV-1), this protein is Major viral transcription factor ICP4 homolog (IE).